A 417-amino-acid chain; its full sequence is Methyltransferase/ribosomally synthesized cyclic peptide lentinulin A precursor ledMA (417 aa).

The segment at 1 to 251 is methyltransferase domain; sequence METPTLNKSG…GVSTFYIPPK (251 aa). Residues arginine 72, tyrosine 76, and tyrosine 98 contribute to the active site. Tyrosine 98, histidine 100, valine 103, alanine 130, glutamine 172, alanine 213, serine 244, and threonine 245 together coordinate S-adenosyl-L-methionine. A clasp domain region spans residues 252 to 378; it reads ERKEINVDII…WAFRCAMKEM (127 aa). Residues 379-399 form a precursor leader region; that stretch reads PISLLDNAKQSMEEASEQGFP. Isoleucine 401 bears the N-methylisoleucine mark. An N-methylvaline mark is found at valine 403 and valine 404. N-methylglycine is present on glycine 405. N-methylvaline occurs at positions 406 and 407. The residue at position 408 (glycine 408) is an N-methylglycine. Position 410 is an N-methylvaline (valine 410). Position 411 is an N-methylglycine (glycine 411). At valine 413 the chain carries N-methylvaline.

In the N-terminal section; belongs to the precorrin methyltransferase family. As to quaternary structure, homodimer. LedMA automethylates at Ile-401, Val-403, Val-404, Gly-405, Val-406, Val-407, Gly-408, Val-410, Gly-411 and Val-413 before being processed by the prolyloligopeptidase ledP which likely forms a peptidyl ester upon removal of the follower propeptide, which then undergoes macrocyclization with the N-terminus of the modified core peptide. Peptide backbone alpha-N-methylations change the physicochemical properties of amide bonds to provide structural constraints and other favorable characteristics including biological membrane permeability to peptides.

The protein operates within mycotoxin biosynthesis. Fusion protein of the methyltransferase ledM and the lentinulin A core peptide; part of the gene cluster that mediates the biosynthesis of lentinulin A, a highly methylated cyclic dodecapeptide with nematodicidal activity. Lentinulin A derives from the C-terminus of the ledMA protein, and it is the ledMA protein that methylates its own C-terminus using S-adenosyl methionine (SAM). The C-terminus is subsequently cleaved off and macrocyclized by the prolyloligopeptidase ledP to give the final product. The polypeptide is Methyltransferase/ribosomally synthesized cyclic peptide lentinulin A precursor ledMA (Lentinula edodes (Shiitake mushroom)).